A 385-amino-acid chain; its full sequence is Rubredoxin-NAD(+) reductase (385 aa).

Residues 8–11 (AGTA), 32–33 (SR), isoleucine 79, glutamate 156, aspartate 275, and isoleucine 293 each bind FAD.

This sequence belongs to the FAD-dependent oxidoreductase family. Homodimer. It depends on FAD as a cofactor.

The protein localises to the cytoplasm. It carries out the reaction 2 reduced [rubredoxin] + NAD(+) + H(+) = 2 oxidized [rubredoxin] + NADH. It functions in the pathway hydrocarbon metabolism; alkane degradation. Involved in the hydrocarbon hydroxylating system, which transfers electrons from NADH to rubredoxin reductase and then through rubredoxin to alkane 1 monooxygenase. This Ectopseudomonas oleovorans (Pseudomonas oleovorans) protein is Rubredoxin-NAD(+) reductase (alkT).